A 148-amino-acid chain; its full sequence is Putative nickel-responsive regulator (148 aa).

H88, H99, H101, and C107 together coordinate Ni(2+).

This sequence belongs to the transcriptional regulatory CopG/NikR family. Requires Ni(2+) as cofactor.

Transcriptional regulator. The polypeptide is Putative nickel-responsive regulator (Helicobacter pylori (strain P12)).